We begin with the raw amino-acid sequence, 825 residues long: KH domain-containing protein YLL032C (825 aa).

The region spanning 482-556 (PAEESFFIPE…ANICLAKNDL (75 aa)) is the KH domain. Low complexity predominate over residues 727–740 (SSKSNTSNSNTNGN). The segment at 727–766 (SSKSNTSNSNTNGNFRSMNNAKSRTTIDNTSQSGASPQRH) is disordered. The segment covering 741–762 (FRSMNNAKSRTTIDNTSQSGAS) has biased composition (polar residues). Ser762 carries the post-translational modification Phosphoserine.

Its subcellular location is the cytoplasm. This is KH domain-containing protein YLL032C from Saccharomyces cerevisiae (strain ATCC 204508 / S288c) (Baker's yeast).